A 953-amino-acid polypeptide reads, in one-letter code: Eukaryotic translation initiation factor 3 subunit A (953 aa).

Positions 323-504 (LQKMASHVLL…KSISFGLDLH (182 aa)) constitute a PCI domain. Coiled-coil stretches lie at residues 593 to 642 (QERE…KRQA), 670 to 704 (MNAD…VDYF), and 732 to 877 (ENQE…LEER). The tract at residues 603–623 (IKKQKVENQEAEQKRLDEERR) is disordered. Disordered stretches follow at residues 810 to 861 (ERKK…EIDR) and 893 to 953 (GWGD…ITMS). Composition is skewed to basic and acidic residues over residues 812 to 861 (KKIE…EIDR), 895 to 919 (GDHE…RGGD), and 928 to 953 (WQRE…ITMS).

This sequence belongs to the eIF-3 subunit A family. In terms of assembly, component of the eukaryotic translation initiation factor 3 (eIF-3) complex.

Its subcellular location is the cytoplasm. Functionally, RNA-binding component of the eukaryotic translation initiation factor 3 (eIF-3) complex, which is involved in protein synthesis of a specialized repertoire of mRNAs and, together with other initiation factors, stimulates binding of mRNA and methionyl-tRNAi to the 40S ribosome. The eIF-3 complex specifically targets and initiates translation of a subset of mRNAs involved in cell proliferation. The protein is Eukaryotic translation initiation factor 3 subunit A of Nematostella vectensis (Starlet sea anemone).